Consider the following 502-residue polypeptide: Mannitol 2-dehydrogenase (502 aa).

37 to 48 (IVHIGVGGFHRA) lines the NAD(+) pocket.

Belongs to the mannitol dehydrogenase family. As to quaternary structure, monomer.

It catalyses the reaction D-mannitol + NAD(+) = D-fructose + NADH + H(+). Catalyzes the NAD(H)-dependent interconversion of D-fructose and D-mannitol in the mannitol metabolic pathway. This Emericella nidulans (strain FGSC A4 / ATCC 38163 / CBS 112.46 / NRRL 194 / M139) (Aspergillus nidulans) protein is Mannitol 2-dehydrogenase.